The primary structure comprises 565 residues: Proline--tRNA ligase (565 aa).

The protein belongs to the class-II aminoacyl-tRNA synthetase family. ProS type 1 subfamily. Homodimer.

It localises to the cytoplasm. The enzyme catalyses tRNA(Pro) + L-proline + ATP = L-prolyl-tRNA(Pro) + AMP + diphosphate. In terms of biological role, catalyzes the attachment of proline to tRNA(Pro) in a two-step reaction: proline is first activated by ATP to form Pro-AMP and then transferred to the acceptor end of tRNA(Pro). As ProRS can inadvertently accommodate and process non-cognate amino acids such as alanine and cysteine, to avoid such errors it has two additional distinct editing activities against alanine. One activity is designated as 'pretransfer' editing and involves the tRNA(Pro)-independent hydrolysis of activated Ala-AMP. The other activity is designated 'posttransfer' editing and involves deacylation of mischarged Ala-tRNA(Pro). The misacylated Cys-tRNA(Pro) is not edited by ProRS. The polypeptide is Proline--tRNA ligase (Lactobacillus delbrueckii subsp. bulgaricus (strain ATCC BAA-365 / Lb-18)).